We begin with the raw amino-acid sequence, 774 residues long: E3 ubiquitin-protein ligase UHRF1 (774 aa).

One can recognise a Ubiquitin-like domain in the interval 1–78 (MWIQVRTMDG…IQLLVRQSLA (78 aa)). 5 positions are modified to phosphoserine: Ser76, Ser91, Ser93, Ser95, and Ser161. Positions 83-120 (TKERDSELSDSDSGYGVGHSESDKSSTHGEGTADGDDK) are disordered. 2 tudor-like regions span residues 129 to 205 (GLYK…ARAR) and 212 to 280 (DLEV…IELP). A Glycyl lysine isopeptide (Lys-Gly) (interchain with G-Cter in SUMO2) cross-link involves residue Lys276. Ser284 is subject to Phosphoserine. The tract at residues 293-298 (RKSGPS) is linker. Position 295 is a phosphoserine; by PKA (Ser295). The PHD-type zinc-finger motif lies at 296 to 363 (GPSCQYCKDD…EWYCPSCRTD (68 aa)). Histone H3R2me0 binding stretches follow at residues 330 to 334 (CDECD) and 350 to 352 (PPE). Residue Ser365 is modified to Phosphoserine. Residue Lys382 forms a Glycyl lysine isopeptide (Lys-Gly) (interchain with G-Cter in SUMO2) linkage. The interval 382–605 (KMASATSSSR…QLGLTMQYPE (224 aa)) is methyl-CpG binding and interaction with HDAC1. Lys396 is modified (N6-acetyllysine). A YDG domain is found at 416–578 (GPIPGVPVGT…FIVWRYLLRR (163 aa)). The tract at residues 442–443 (HV) is required to promote base flipping. DNA is bound by residues 460–461 (AG) and Asp466. 2 required for formation of a 5-methylcytosine-binding pocket regions span residues 463–466 (YEDD) and 475–478 (YTGS). Phosphoserine is present on Ser511. Lys542 is subject to N6-acetyllysine; alternate. A Glycyl lysine isopeptide (Lys-Gly) (interchain with G-Cter in SUMO2); alternate cross-link involves residue Lys542. A disordered region spans residues 616 to 657 (KNRKRPAKALEQGPSSSKIGKSKRKSTGPATTSPRVSKKSKL). Ser631 is subject to Phosphoserine; by CDK1. Residues Ser641 and Ser648 each carry the phosphoserine modification. A Glycyl lysine isopeptide (Lys-Gly) (interchain with G-Cter in SUMO2) cross-link involves residue Lys656. The RING-type zinc finger occupies 705-744 (CICCQELVFRPVTTVCQHNVCKDCLDRSFRAQVFSCPACR). Position 751 is a phosphoserine (Ser751).

As to quaternary structure, interacts with DNMT3A and DNMT3B. Interacts with DNMT1; the interaction is direct. Interacts with USP7; leading to its deubiquitination. Interacts with histone H3. Interacts with HDAC1, but not with HDAC2. Interacts with BLTP3A. Interacts with PML. Interacts with EHMT2. Binds methylated CpG containing oligonucleotides. Interacts with ZNF263; recruited to the SIX3 promoter along with other proteins involved in chromatin modification and transcriptional corepression where it contributes to transcriptional repression. Interacts with UHRF2. Interacts with FANCD2. Interacts with TET1 isoform 2; this interaction induces the recruitment of TET1 isoform 2 to replicating heterochromatin. In terms of processing, phosphorylation at Ser-295 of the linker region decreases the binding to H3K9me3. Phosphorylation at Ser-631 by CDK1 during M phase impairs interaction with USP7, preventing deubiquitination and leading to degradation by the proteasome. Post-translationally, ubiquitinated; which leads to proteasomal degradation. Autoubiquitinated; interaction with USP7 leads to deubiquitination and prevents degradation. Ubiquitination and degradation takes place during M phase, when phosphorylation at Ser-631 prevents interaction with USP7 and subsequent deubiquitination. Polyubiquitination may be stimulated by DNA damage.

It localises to the nucleus. The catalysed reaction is S-ubiquitinyl-[E2 ubiquitin-conjugating enzyme]-L-cysteine + [acceptor protein]-L-lysine = [E2 ubiquitin-conjugating enzyme]-L-cysteine + N(6)-ubiquitinyl-[acceptor protein]-L-lysine.. It functions in the pathway protein modification; protein ubiquitination. Functionally, multidomain protein that acts as a key epigenetic regulator by bridging DNA methylation and chromatin modification. Specifically recognizes and binds hemimethylated DNA at replication forks via its YDG domain and recruits DNMT1 methyltransferase to ensure faithful propagation of the DNA methylation patterns through DNA replication. In addition to its role in maintenance of DNA methylation, also plays a key role in chromatin modification: through its tudor-like regions and PHD-type zinc fingers, specifically recognizes and binds histone H3 trimethylated at 'Lys-9' (H3K9me3) and unmethylated at 'Arg-2' (H3R2me0), respectively, and recruits chromatin proteins. Enriched in pericentric heterochromatin where it recruits different chromatin modifiers required for this chromatin replication. Also localizes to euchromatic regions where it negatively regulates transcription possibly by impacting DNA methylation and histone modifications. Has E3 ubiquitin-protein ligase activity by mediating the ubiquitination of target proteins such as histone H3 and PML. It is still unclear how E3 ubiquitin-protein ligase activity is related to its role in chromatin in vivo. Plays a role in DNA repair by cooperating with UHRF2 to ensure recruitment of FANCD2 to interstrand cross-links (ICLs) leading to FANCD2 activation. Plays a pivotal role in the establishment of correct spindle architecture by catalyzing the 'Lys-63'-linked ubiquitination of KIF11, thereby controlling KIF11 localization on the spindle. The polypeptide is E3 ubiquitin-protein ligase UHRF1 (Uhrf1) (Rattus norvegicus (Rat)).